We begin with the raw amino-acid sequence, 133 residues long: uncharacterized protein (133 aa).

The helical transmembrane segment at 91 to 113 threads the bilayer; it reads LFATALISCIPSSFSALSFLATL.

It localises to the membrane. This is an uncharacterized protein from Saccharomyces cerevisiae (strain ATCC 204508 / S288c) (Baker's yeast).